A 310-amino-acid polypeptide reads, in one-letter code: Tagatose-6-phosphate kinase (310 aa).

It belongs to the carbohydrate kinase PfkB family. LacC subfamily.

It carries out the reaction D-tagatofuranose 6-phosphate + ATP = D-tagatofuranose 1,6-bisphosphate + ADP + H(+). The protein operates within carbohydrate metabolism; D-tagatose 6-phosphate degradation; D-glyceraldehyde 3-phosphate and glycerone phosphate from D-tagatose 6-phosphate: step 1/2. The protein is Tagatose-6-phosphate kinase of Staphylococcus aureus (strain USA300 / TCH1516).